The primary structure comprises 245 residues: Aliphatic sulfonates import ATP-binding protein SsuB 1 (245 aa).

The ABC transporter domain maps to Val-8–Tyr-223. Gly-40 to Thr-47 is a binding site for ATP.

Belongs to the ABC transporter superfamily. Aliphatic sulfonates importer (TC 3.A.1.17.2) family. The complex is composed of two ATP-binding proteins (SsuB), two transmembrane proteins (SsuC) and a solute-binding protein (SsuA).

Its subcellular location is the cell membrane. The catalysed reaction is ATP + H2O + aliphatic sulfonate-[sulfonate-binding protein]Side 1 = ADP + phosphate + aliphatic sulfonateSide 2 + [sulfonate-binding protein]Side 1.. Functionally, part of the ABC transporter complex SsuABC involved in aliphatic sulfonates import. Responsible for energy coupling to the transport system. The chain is Aliphatic sulfonates import ATP-binding protein SsuB 1 from Nocardia farcinica (strain IFM 10152).